Consider the following 505-residue polypeptide: Deoxyguanosinetriphosphate triphosphohydrolase (505 aa).

Residues Arg66–Cys273 form the HD domain.

The protein belongs to the dGTPase family. Type 1 subfamily. As to quaternary structure, homotetramer. Requires Mg(2+) as cofactor.

The enzyme catalyses dGTP + H2O = 2'-deoxyguanosine + triphosphate + H(+). Functionally, dGTPase preferentially hydrolyzes dGTP over the other canonical NTPs. In Escherichia coli O139:H28 (strain E24377A / ETEC), this protein is Deoxyguanosinetriphosphate triphosphohydrolase.